A 513-amino-acid polypeptide reads, in one-letter code: ATP synthase subunit alpha (513 aa).

Position 169-176 (glycine 169–threonine 176) interacts with ATP.

The protein belongs to the ATPase alpha/beta chains family. As to quaternary structure, F-type ATPases have 2 components, CF(1) - the catalytic core - and CF(0) - the membrane proton channel. CF(1) has five subunits: alpha(3), beta(3), gamma(1), delta(1), epsilon(1). CF(0) has three main subunits: a(1), b(2) and c(9-12). The alpha and beta chains form an alternating ring which encloses part of the gamma chain. CF(1) is attached to CF(0) by a central stalk formed by the gamma and epsilon chains, while a peripheral stalk is formed by the delta and b chains.

The protein localises to the cell inner membrane. It carries out the reaction ATP + H2O + 4 H(+)(in) = ADP + phosphate + 5 H(+)(out). Functionally, produces ATP from ADP in the presence of a proton gradient across the membrane. The alpha chain is a regulatory subunit. This is ATP synthase subunit alpha from Francisella tularensis subsp. holarctica (strain OSU18).